The following is a 75-amino-acid chain: Dermaseptin-related peptide (75 aa).

The signal sequence occupies residues M1 to C22. Positions E23–M43 are excised as a propeptide. Residues E24–R44 are disordered. The span at E30–Q40 shows a compositional bias: acidic residues. Q72 is modified (glutamine amide). Residues E74 to Q75 constitute a propeptide that is removed on maturation.

As to expression, expressed by the skin glands.

It is found in the secreted. Has antibacterial activity against Gram-positive bacterium M.luteus NCT C2665 but not against Gram-negative bacterium E.coli K12D31. The protein is Dermaseptin-related peptide of Agalychnis callidryas (Red-eyed tree frog).